Consider the following 132-residue polypeptide: Small ribosomal subunit protein uS8 (132 aa).

Belongs to the universal ribosomal protein uS8 family. As to quaternary structure, part of the 30S ribosomal subunit. Contacts proteins S5 and S12.

One of the primary rRNA binding proteins, it binds directly to 16S rRNA central domain where it helps coordinate assembly of the platform of the 30S subunit. The protein is Small ribosomal subunit protein uS8 of Mycobacterium avium (strain 104).